The primary structure comprises 354 residues: uncharacterized protein (354 aa).

An N-terminal signal peptide occupies residues 1-21; that stretch reads MRYLLIVITFFMGFSSLPAWA.

The protein to E.coli YbgO.

May be involved in a fimbrial system chaperoned by YqiH and exported by YqiG. This is an uncharacterized protein from Escherichia coli (strain K12).